Reading from the N-terminus, the 274-residue chain is ATP synthase subunit b 2 (274 aa).

Residues 2–22 form a helical membrane-spanning segment; that stretch reads HIDWFVLLAQLVNFLILIYLL.

The protein belongs to the ATPase B chain family. As to quaternary structure, F-type ATPases have 2 components, F(1) - the catalytic core - and F(0) - the membrane proton channel. F(1) has five subunits: alpha(3), beta(3), gamma(1), delta(1), epsilon(1). F(0) has three main subunits: a(1), b(2) and c(10-14). The alpha and beta chains form an alternating ring which encloses part of the gamma chain. F(1) is attached to F(0) by a central stalk formed by the gamma and epsilon chains, while a peripheral stalk is formed by the delta and b chains.

The protein localises to the cell inner membrane. Functionally, f(1)F(0) ATP synthase produces ATP from ADP in the presence of a proton or sodium gradient. F-type ATPases consist of two structural domains, F(1) containing the extramembraneous catalytic core and F(0) containing the membrane proton channel, linked together by a central stalk and a peripheral stalk. During catalysis, ATP synthesis in the catalytic domain of F(1) is coupled via a rotary mechanism of the central stalk subunits to proton translocation. In terms of biological role, component of the F(0) channel, it forms part of the peripheral stalk, linking F(1) to F(0). The polypeptide is ATP synthase subunit b 2 (Syntrophus aciditrophicus (strain SB)).